The following is a 313-amino-acid chain: Porphobilinogen deaminase (313 aa).

At Cys-242 the chain carries S-(dipyrrolylmethanemethyl)cysteine.

The protein belongs to the HMBS family. In terms of assembly, monomer. Requires dipyrromethane as cofactor.

It catalyses the reaction 4 porphobilinogen + H2O = hydroxymethylbilane + 4 NH4(+). It participates in porphyrin-containing compound metabolism; protoporphyrin-IX biosynthesis; coproporphyrinogen-III from 5-aminolevulinate: step 2/4. In terms of biological role, tetrapolymerization of the monopyrrole PBG into the hydroxymethylbilane pre-uroporphyrinogen in several discrete steps. This chain is Porphobilinogen deaminase, found in Pseudomonas putida (strain W619).